A 208-amino-acid chain; its full sequence is FMN-dependent NADH:quinone oxidoreductase (208 aa).

FMN contacts are provided by residues 17-19, 99-102, and 143-146; these read SNS, MWNL, and SRGG.

Belongs to the azoreductase type 1 family. Homodimer. It depends on FMN as a cofactor.

It catalyses the reaction 2 a quinone + NADH + H(+) = 2 a 1,4-benzosemiquinone + NAD(+). The enzyme catalyses N,N-dimethyl-1,4-phenylenediamine + anthranilate + 2 NAD(+) = 2-(4-dimethylaminophenyl)diazenylbenzoate + 2 NADH + 2 H(+). In terms of biological role, quinone reductase that provides resistance to thiol-specific stress caused by electrophilic quinones. Also exhibits azoreductase activity. Catalyzes the reductive cleavage of the azo bond in aromatic azo compounds to the corresponding amines. The sequence is that of FMN-dependent NADH:quinone oxidoreductase from Staphylococcus aureus (strain Mu50 / ATCC 700699).